The primary structure comprises 357 residues: MGIYLSTPKTDKFSEDGENHKLRYGLSSMQGWRASMEDAHAAILDLDDNTSFLGVYDGHGGKVVSKFCAKYLHQQVLSDEAYAAGDVGTSLQKAFFRMDEMMQGQRGWRELAVLGDKINKFSGMIEGLIWSPRSGDSANKPDAWAFEEGPHSDFAGPNSGSTACVAVVRDKQLFVANAGDSRCVISRKNQAYNLSRDHKPDLEAEKERILKAGGFIHAGRVNGSLNLSRAIGDMEFKQNKFLPSEKQIVTASPDVNTVELCDDDDFLVLACDGIWDCMTSQQLVDFIHEQLNSETKLSVVCEKVLDRCLAPNTSGGEGCDNMTMILVRFKNPTPSETELKPEASQAEGNHDEPSSSN.

Positions 23-329 constitute a PPM-type phosphatase domain; the sequence is RYGLSSMQGW…DNMTMILVRF (307 aa). Residues Asp57, Gly58, Asp272, and Asp320 each coordinate Mn(2+). The segment at 331–357 is disordered; the sequence is NPTPSETELKPEASQAEGNHDEPSSSN. A compositionally biased stretch (basic and acidic residues) spans 348-357; that stretch reads GNHDEPSSSN.

The protein belongs to the PP2C family. The cofactor is Mg(2+). It depends on Mn(2+) as a cofactor.

The enzyme catalyses O-phospho-L-seryl-[protein] + H2O = L-seryl-[protein] + phosphate. It carries out the reaction O-phospho-L-threonyl-[protein] + H2O = L-threonyl-[protein] + phosphate. The protein is Probable protein phosphatase 2C 60 of Arabidopsis thaliana (Mouse-ear cress).